A 2958-amino-acid chain; its full sequence is Protein CSF1 (2958 aa).

At 1 to 17 (MEAISQLRGVPLTHQKD) the chain is on the cytoplasmic side. A helical; Signal-anchor for type II membrane protein transmembrane segment spans residues 18-38 (FSWVFLVDWILTVVVCLTMIF). Topologically, residues 39 to 2958 (YMGRIYAYLV…QYVKILDDTH (2920 aa)) are extracellular. Asn82, Asn117, Asn144, Asn271, Asn478, Asn530, Asn816, Asn821, Asn839, and Asn892 each carry an N-linked (GlcNAc...) asparagine glycan. Residues 813-834 (GYQNSSLKNESEDKGPMKRSDL) form a disordered region. Residues 821–834 (NESEDKGPMKRSDL) show a composition bias toward basic and acidic residues. Residues 1175–1196 (MEPSRASFSEDDNDEEADPSSF) form a disordered region. Acidic residues predominate over residues 1183–1192 (SEDDNDEEAD). N-linked (GlcNAc...) asparagine glycans are attached at residues Asn1309, Asn1368, Asn1453, Asn1785, Asn1921, Asn2130, Asn2146, Asn2280, Asn2337, Asn2520, Asn2578, Asn2719, and Asn2869.

It belongs to the CSF1 family. Interacts with MCD4; CSF1 channels phosphatidylethanolamine to MCD4 in the endoplasmic reticulum at contact sites to support GPI anchor biosynthesis.

It is found in the cell membrane. The protein localises to the endoplasmic reticulum membrane. Its subcellular location is the mitochondrion membrane. Its function is as follows. Tube-forming lipid transport protein which provides phosphatidylethanolamine for glycosylphosphatidylinositol (GPI) anchor synthesis in the endoplasmic reticulum. Required for the glucose and other nutrients uptake at low temperature. The protein is Protein CSF1 of Saccharomyces cerevisiae (strain ATCC 204508 / S288c) (Baker's yeast).